Reading from the N-terminus, the 66-residue chain is Cell division protein FtsB (66 aa).

Topologically, residues 1 to 3 are cytoplasmic; sequence MKM. The chain crosses the membrane as a helical span at residues 4–21; the sequence is LKIFLLFLLFWLQCSLWI. The Extracellular portion of the chain corresponds to 22–66; that stretch reads GKNGILDYIKIYKKIIVQKKKNEDFQIRNNQLILEIERLNNAIKN. Positions 38 to 66 form a coiled coil; it reads VQKKKNEDFQIRNNQLILEIERLNNAIKN.

Belongs to the FtsB family.

It localises to the cell membrane. Its function is as follows. Essential cell division protein. May link together the upstream cell division proteins, which are predominantly cytoplasmic, with the downstream cell division proteins, which are predominantly extracellular. In Buchnera aphidicola subsp. Schizaphis graminum (strain Sg), this protein is Cell division protein FtsB.